Consider the following 295-residue polypeptide: uncharacterized protein (295 aa).

The signal sequence occupies residues 1 to 26 (MKKYLALAAIVAICALWLTQNSNFEA).

This is an uncharacterized protein from Archaeoglobus fulgidus (strain ATCC 49558 / DSM 4304 / JCM 9628 / NBRC 100126 / VC-16).